The chain runs to 269 residues: Formamidopyrimidine-DNA glycosylase (269 aa).

Catalysis depends on proline 2, which acts as the Schiff-base intermediate with DNA. Residue glutamate 3 is the Proton donor of the active site. The Proton donor; for beta-elimination activity role is filled by lysine 57. Histidine 90, arginine 109, and lysine 150 together coordinate DNA. The FPG-type zinc finger occupies glutamine 235–lysine 269. Residue arginine 259 is the Proton donor; for delta-elimination activity of the active site.

Belongs to the FPG family. Monomer. It depends on Zn(2+) as a cofactor.

It catalyses the reaction Hydrolysis of DNA containing ring-opened 7-methylguanine residues, releasing 2,6-diamino-4-hydroxy-5-(N-methyl)formamidopyrimidine.. It carries out the reaction 2'-deoxyribonucleotide-(2'-deoxyribose 5'-phosphate)-2'-deoxyribonucleotide-DNA = a 3'-end 2'-deoxyribonucleotide-(2,3-dehydro-2,3-deoxyribose 5'-phosphate)-DNA + a 5'-end 5'-phospho-2'-deoxyribonucleoside-DNA + H(+). In terms of biological role, involved in base excision repair of DNA damaged by oxidation or by mutagenic agents. Acts as a DNA glycosylase that recognizes and removes damaged bases. Has a preference for oxidized purines, such as 7,8-dihydro-8-oxoguanine (8-oxoG). Has AP (apurinic/apyrimidinic) lyase activity and introduces nicks in the DNA strand. Cleaves the DNA backbone by beta-delta elimination to generate a single-strand break at the site of the removed base with both 3'- and 5'-phosphates. The chain is Formamidopyrimidine-DNA glycosylase from Cronobacter sakazakii (strain ATCC BAA-894) (Enterobacter sakazakii).